The following is a 75-amino-acid chain: Chaplin-D (75 aa).

The N-terminal stretch at 1–23 (MKKSAAVVAGAIMALGMAAPAFA) is a signal peptide. In terms of domain architecture, Chaplin spans 34 to 74 (SPGVLSGNVIQVPVHVPVNVCGNSINVVGLLNPAFGNKCEN). Cysteine 54 and cysteine 72 are disulfide-bonded.

The protein belongs to the chaplin family. Short chaplin subfamily.

The protein resides in the cell surface. It localises to the secreted. Its subcellular location is the cell wall. The protein localises to the fimbrium. In terms of biological role, one of 8 partially redundant surface-active proteins required for efficient formation of aerial mycelium; the short chaplins assemble into a hydrophobic, amyloidal fibrillar surface layer that envelopes and protects aerial hyphae and spores, presumably anchored to the long chaplins. Chaplins have an overlapping function with the surface-active SapB peptide; chaplins are essential on minimal medium while on rich medium both chaplins and SapB are required for efficient aerial hyphae formation. Chaplins are also involved in cell attachment to a hydrophobic surface. Forms amyloid fibrils in vitro probably composed of stacked beta-sheets, at low extracellular concentrations individually restores the ability to form aerial hyphae to a chaplin-deficient strain. A small chaplin extract (ChpD, ChpE, ChpF, ChpG and ChpH) self-assembles into 2 different amyloids; small fibrils at the air-water interface form an amphipathic membrane that resembles spore-surface structures involved in aerial hyphae formation, and hydrophilic fibrils in solution that resemble the fibers that attach cells to a hydrophobic surface. At the air-water interface the hydrophilic surface is in contact with water (probably equivalent to the peptidoglycan layer), while the hydrophobic face is exposed to the air, making the surface of the aerial hyphae hydrophobic. A minimal chaplin strain capable of forming aerial mycelium/hyphae on minimal medium contains ChpC, ChpE and ChpH. The strain also has restored rodlet formation on the hyphae surface. A second minimal chaplin strain with ChpA, ChpD and ChpE makes slightly less robust hyphae. A small chaplin extract applied to a chaplin-deficient strain restores aerial hyphae formation. The small chaplin extract forms an amyloid-like structure similar to that seen on the surface of cells without rodlets (rdlA-rdlB deletions), and is highly surface active, reducing surface tension from 72 to 26 mJ/m(2), which probably allows escape of hyphae from an aqueous environment into air. This is Chaplin-D from Streptomyces coelicolor (strain ATCC BAA-471 / A3(2) / M145).